The primary structure comprises 185 residues: MEIQNIVASVDLKGEVNLDECSVILQGEYEPEQFPGLVYRLEDIGTVVLIFRSGKMVCTGAKNREQIYKSVERVREDLEKKCGVKFHGEPEVEIQNIVASIDFHVPLDLDTIAEVLVGDEDVEGIEYEPEQFPGLVLRLREPKVAMLLFYSGKAVCTGAKTEEEPEKAVKKIAEKIEKYGLKLTG.

2 repeat units span residues 3 to 78 and 94 to 176.

The protein belongs to the TBP family.

In terms of biological role, general factor that plays a role in the activation of archaeal genes transcribed by RNA polymerase. Binds specifically to the TATA box promoter element which lies close to the position of transcription initiation. This Methanopyrus kandleri (strain AV19 / DSM 6324 / JCM 9639 / NBRC 100938) protein is TATA-box-binding protein.